Here is a 1430-residue protein sequence, read N- to C-terminus: FYVE, RhoGEF and PH domain-containing protein 6 (1430 aa).

Residues 1 to 36 (MTSAAEIKKPPVAPKPKFVVANNKPAPPPIAPKPDI) form a disordered region. Residues 15 to 24 (KPKFVVANNK) are compositionally biased toward low complexity. Ser231 bears the Phosphoserine mark. Residues 330–351 (CVDTPSESTEEPGNSDSSSSCL) form a disordered region. The segment covering 334–351 (PSESTEEPGNSDSSSSCL) has biased composition (polar residues). Position 515 is a phosphoserine (Ser515). The tract at residues 516-538 (EELLEKSSYPSSEEKSSEKSLER) is disordered. Over residues 527 to 538 (SEEKSSEKSLER) the composition is skewed to basic and acidic residues. Phosphoserine is present on residues Ser554, Ser605, Ser692, and Ser721. 2 disordered regions span residues 695–739 (NYSL…PYKS) and 800–869 (PDGQ…NGMK). The segment covering 728–739 (SRESSSQAPYKS) has biased composition (polar residues). The span at 831 to 847 (PSDEEEIINSSDEDDVS) shows a compositional bias: acidic residues. The segment covering 851-868 (SKGEPDPLEDKQDEDNGM) has biased composition (basic and acidic residues). The DH domain occupies 871-1060 (KVHHIAKEIM…IEVANHANDT (190 aa)). The PH 1 domain maps to 1089-1183 (VFLKEGILMK…WLEAISRAIE (95 aa)). Ser1197 carries the post-translational modification Phosphoserine. The segment at 1222–1281 (DTRATMCMICTSEFTLTWRRHHCRACGKIVCQACSSNKYGLDYLKNQPARVCEHCFQELQ) adopts an FYVE-type zinc-finger fold. Zn(2+) is bound by residues Cys1228, Cys1231, Cys1244, Cys1247, Cys1252, Cys1255, Cys1273, and Cys1276. Residues 1333-1429 (DSSMSGYLYR…WIEAFQEGTI (97 aa)) form the PH 2 domain.

Its subcellular location is the cytoplasm. The protein resides in the cytoskeleton. May activate CDC42, a member of the Ras-like family of Rho- and Rac proteins, by exchanging bound GDP for free GTP. May play a role in regulating the actin cytoskeleton and cell shape. This is FYVE, RhoGEF and PH domain-containing protein 6 (FGD6) from Homo sapiens (Human).